Consider the following 335-residue polypeptide: Probable pectinesterase 29 (335 aa).

Positions 1–24 (MGTHRIFIGLIALCCFCLPHLIEA) are cleaved as a signal peptide. A glycan (N-linked (GlcNAc...) asparagine) is linked at N43. Catalysis depends on D166, which acts as the Proton donor. The active-site Nucleophile is the D187. Positions 248 and 250 each coordinate substrate. N262 is a glycosylation site (N-linked (GlcNAc...) asparagine).

Belongs to the pectinesterase family. In terms of tissue distribution, expressed in flower buds.

Its subcellular location is the secreted. It is found in the cell wall. The catalysed reaction is [(1-&gt;4)-alpha-D-galacturonosyl methyl ester](n) + n H2O = [(1-&gt;4)-alpha-D-galacturonosyl](n) + n methanol + n H(+). Its pathway is glycan metabolism; pectin degradation; 2-dehydro-3-deoxy-D-gluconate from pectin: step 1/5. In terms of biological role, acts in the modification of cell walls via demethylesterification of cell wall pectin. The polypeptide is Probable pectinesterase 29 (PME29) (Arabidopsis thaliana (Mouse-ear cress)).